Here is a 764-residue protein sequence, read N- to C-terminus: 5-methyltetrahydropteroyltriglutamate--homocysteine methyltransferase (764 aa).

5-methyltetrahydropteroyltri-L-glutamate-binding positions include 16–19 and Lys-115; that span reads RELK. Residues 435-437 and Glu-488 each bind L-homocysteine; that span reads IGS. Residues 435-437 and Glu-488 each bind L-methionine; that span reads IGS. 5-methyltetrahydropteroyltri-L-glutamate contacts are provided by residues 519-520 and Trp-565; that span reads RC. Asp-603 contacts L-homocysteine. Asp-603 lines the L-methionine pocket. Glu-609 contributes to the 5-methyltetrahydropteroyltri-L-glutamate binding site. Residues His-645, Cys-647, and Glu-669 each contribute to the Zn(2+) site. Catalysis depends on His-698, which acts as the Proton donor. Cys-730 lines the Zn(2+) pocket.

It belongs to the vitamin-B12 independent methionine synthase family. The cofactor is Zn(2+).

The enzyme catalyses 5-methyltetrahydropteroyltri-L-glutamate + L-homocysteine = tetrahydropteroyltri-L-glutamate + L-methionine. It participates in amino-acid biosynthesis; L-methionine biosynthesis via de novo pathway; L-methionine from L-homocysteine (MetE route): step 1/1. Its function is as follows. Catalyzes the transfer of a methyl group from 5-methyltetrahydrofolate to homocysteine resulting in methionine formation. This Burkholderia pseudomallei (strain K96243) protein is 5-methyltetrahydropteroyltriglutamate--homocysteine methyltransferase.